The sequence spans 191 residues: Protein GrpE (191 aa).

The protein belongs to the GrpE family. Homodimer.

The protein localises to the cytoplasm. Functionally, participates actively in the response to hyperosmotic and heat shock by preventing the aggregation of stress-denatured proteins, in association with DnaK and GrpE. It is the nucleotide exchange factor for DnaK and may function as a thermosensor. Unfolded proteins bind initially to DnaJ; upon interaction with the DnaJ-bound protein, DnaK hydrolyzes its bound ATP, resulting in the formation of a stable complex. GrpE releases ADP from DnaK; ATP binding to DnaK triggers the release of the substrate protein, thus completing the reaction cycle. Several rounds of ATP-dependent interactions between DnaJ, DnaK and GrpE are required for fully efficient folding. In Listeria monocytogenes serotype 1/2a (strain 10403S), this protein is Protein GrpE.